The chain runs to 447 residues: Omega-6 fatty acid desaturase, chloroplastic (447 aa).

A chloroplast-targeting transit peptide spans 1-65 (MESAITISNH…TRRKSTLVQA (65 aa)). Val-66 is subject to N-acetylvaline. Residues 171–175 (HDCAH) carry the Histidine box-1 motif. Positions 207–211 (HDQHH) match the Histidine box-2 motif. Positions 367–371 (HIPHH) match the Histidine box-3 motif.

Belongs to the fatty acid desaturase type 1 family.

It localises to the plastid. Its subcellular location is the chloroplast membrane. The catalysed reaction is a (9Z)-octadecenoyl-containing glycerolipid + 2 reduced [2Fe-2S]-[ferredoxin] + O2 + 2 H(+) = a (9Z,12Z)-octadecadienoyl-containing glycerolipid + 2 oxidized [2Fe-2S]-[ferredoxin] + 2 H2O. It functions in the pathway lipid metabolism; polyunsaturated fatty acid biosynthesis. Chloroplast omega-6 fatty acid desaturase introduces the second double bond in the biosynthesis of 16:3 and 18:3 fatty acids, important constituents of plant membranes. It is thought to use ferredoxin as an electron donor and to act on fatty acids esterified to galactolipids, sulfolipids and phosphatidylglycerol. This is Omega-6 fatty acid desaturase, chloroplastic from Spinacia oleracea (Spinach).